The chain runs to 202 residues: Glycerol-3-phosphate acyltransferase (202 aa).

4 helical membrane passes run alanine 2–valine 22, aspartate 82–histidine 102, alanine 119–phenylalanine 139, and valine 158–isoleucine 178.

This sequence belongs to the PlsY family. As to quaternary structure, probably interacts with PlsX.

Its subcellular location is the cell inner membrane. The enzyme catalyses an acyl phosphate + sn-glycerol 3-phosphate = a 1-acyl-sn-glycero-3-phosphate + phosphate. It participates in lipid metabolism; phospholipid metabolism. Functionally, catalyzes the transfer of an acyl group from acyl-phosphate (acyl-PO(4)) to glycerol-3-phosphate (G3P) to form lysophosphatidic acid (LPA). This enzyme utilizes acyl-phosphate as fatty acyl donor, but not acyl-CoA or acyl-ACP. This Cupriavidus taiwanensis (strain DSM 17343 / BCRC 17206 / CCUG 44338 / CIP 107171 / LMG 19424 / R1) (Ralstonia taiwanensis (strain LMG 19424)) protein is Glycerol-3-phosphate acyltransferase.